A 39-amino-acid polypeptide reads, in one-letter code: Omega-theraphotoxin-Ba1a (39 aa).

3 cysteine pairs are disulfide-bonded: Cys4–Cys25, Cys8–Cys31, and Cys17–Cys36.

The protein belongs to the neurotoxin 12 (Hwtx-2) family. 06 (TXP1) subfamily. As to expression, expressed by the venom gland.

Its subcellular location is the secreted. Its function is as follows. Inhibits voltage-gated calcium channels (Cav) in rat cerebellar granule cells. Has insecticidal activity to crickets (Acheta domesticus). Is not toxic to mice. The sequence is that of Omega-theraphotoxin-Ba1a from Brachypelma albiceps (Mexican golden redrump tarantula).